The primary structure comprises 164 residues: Transcriptional repressor NrdR (164 aa).

A zinc finger spans residues Cys-3–Cys-34. Positions Leu-49–Glu-139 constitute an ATP-cone domain.

The protein belongs to the NrdR family. Zn(2+) serves as cofactor.

Functionally, negatively regulates transcription of bacterial ribonucleotide reductase nrd genes and operons by binding to NrdR-boxes. The polypeptide is Transcriptional repressor NrdR (Streptococcus pyogenes serotype M5 (strain Manfredo)).